A 152-amino-acid chain; its full sequence is SsrA-binding protein (152 aa).

This sequence belongs to the SmpB family.

Its subcellular location is the cytoplasm. In terms of biological role, required for rescue of stalled ribosomes mediated by trans-translation. Binds to transfer-messenger RNA (tmRNA), required for stable association of tmRNA with ribosomes. tmRNA and SmpB together mimic tRNA shape, replacing the anticodon stem-loop with SmpB. tmRNA is encoded by the ssrA gene; the 2 termini fold to resemble tRNA(Ala) and it encodes a 'tag peptide', a short internal open reading frame. During trans-translation Ala-aminoacylated tmRNA acts like a tRNA, entering the A-site of stalled ribosomes, displacing the stalled mRNA. The ribosome then switches to translate the ORF on the tmRNA; the nascent peptide is terminated with the 'tag peptide' encoded by the tmRNA and targeted for degradation. The ribosome is freed to recommence translation, which seems to be the essential function of trans-translation. This Helicobacter pylori (strain Shi470) protein is SsrA-binding protein.